The following is a 160-amino-acid chain: Putative lipoprotein YfiB (160 aa).

Residues 1 to 18 form the signal peptide; the sequence is MIKHLVAPLVFTSLILTG. C19 carries N-palmitoyl cysteine lipidation. A lipid anchor (S-diacylglycerol cysteine) is attached at C19. In terms of domain architecture, OmpA-like spans 43–160; sequence AGDWSLGLSD…RRVAVVITTP (118 aa).

The protein belongs to the outer membrane OOP (TC 1.B.6) superfamily.

It localises to the cell membrane. The sequence is that of Putative lipoprotein YfiB (yfiB) from Escherichia coli (strain K12).